Here is a 341-residue protein sequence, read N- to C-terminus: tRNA N6-adenosine threonylcarbamoyltransferase (341 aa).

Fe cation is bound by residues His111 and His115. Residues 133–137, Asp166, Gly179, Asp183, and Asn273 each bind substrate; that span reads AVSGG. Asp301 contacts Fe cation.

It belongs to the KAE1 / TsaD family. It depends on Fe(2+) as a cofactor.

It is found in the cytoplasm. It carries out the reaction L-threonylcarbamoyladenylate + adenosine(37) in tRNA = N(6)-L-threonylcarbamoyladenosine(37) in tRNA + AMP + H(+). Its function is as follows. Required for the formation of a threonylcarbamoyl group on adenosine at position 37 (t(6)A37) in tRNAs that read codons beginning with adenine. Is involved in the transfer of the threonylcarbamoyl moiety of threonylcarbamoyl-AMP (TC-AMP) to the N6 group of A37, together with TsaE and TsaB. TsaD likely plays a direct catalytic role in this reaction. The chain is tRNA N6-adenosine threonylcarbamoyltransferase from Geotalea daltonii (strain DSM 22248 / JCM 15807 / FRC-32) (Geobacter daltonii).